The following is a 111-amino-acid chain: Putative FAD-linked sulfhydryl oxidase 347L (111 aa).

The ERV/ALR sulfhydryl oxidase domain maps to 2–109 (TDIDPHIWGP…LPESVARKKW (108 aa)). C49 and C52 are disulfide-bonded.

It belongs to the IIV-6 347L family. FAD is required as a cofactor.

The enzyme catalyses 2 R'C(R)SH + O2 = R'C(R)S-S(R)CR' + H2O2. FAD-dependent sulfhydryl oxidase that catalyzes disulfide bond formation. This is Putative FAD-linked sulfhydryl oxidase 347L from Invertebrate iridescent virus 6 (IIV-6).